A 156-amino-acid polypeptide reads, in one-letter code: Small ribosomal subunit protein uS7 (156 aa).

The protein belongs to the universal ribosomal protein uS7 family. In terms of assembly, part of the 30S ribosomal subunit. Contacts proteins S9 and S11.

One of the primary rRNA binding proteins, it binds directly to 16S rRNA where it nucleates assembly of the head domain of the 30S subunit. Is located at the subunit interface close to the decoding center, probably blocks exit of the E-site tRNA. This is Small ribosomal subunit protein uS7 from Prochlorococcus marinus (strain MIT 9211).